Consider the following 224-residue polypeptide: Propanediol dehydratase medium subunit (224 aa).

The targets protein to the BMC stretch occupies residues 1-18; the sequence is MEINEKLLRQIIEDVLRD.

The protein belongs to the diol/glycerol dehydratase medium subunit family. As to quaternary structure, the propanediol dehydratase enzyme is a heterotrimeric complex composed of a large (PduC), a medium (PduD) and a small (PduE) subunit. Requires adenosylcob(III)alamin as cofactor.

Its subcellular location is the bacterial microcompartment. It catalyses the reaction propane-1,2-diol = propanal + H2O. Its pathway is polyol metabolism; 1,2-propanediol degradation. Its activity is regulated as follows. Inhibited by glycerol. In terms of biological role, part of the PduCDE complex that catalyzes the dehydration of 1,2-propanediol (1,2-PD) to propionaldehyde. Required for S.typhimurium growth on 1,2-PD as the sole carbon and energy source. This subunit is directly targeted to the bacterial microcompartment (BMC) dedicated to 1,2-PD degradation, and is also responsible for targeting the other 2 subunits (pduC and pduE). The 1,2-PD-specific bacterial microcompartment (BMC) concentrates low levels of 1,2-PD catabolic enzymes, concentrates volatile reaction intermediates thus enhancing pathway flux and keeps the level of toxic, mutagenic propionaldehyde low. The protein is Propanediol dehydratase medium subunit of Salmonella typhimurium (strain LT2 / SGSC1412 / ATCC 700720).